Here is a 104-residue protein sequence, read N- to C-terminus: L-rhamnose mutarotase (104 aa).

Y18 is a binding site for substrate. H22 serves as the catalytic Proton donor. Substrate contacts are provided by residues Y41 and 76–77; that span reads WW.

Belongs to the rhamnose mutarotase family. Homodimer.

The protein resides in the cytoplasm. The enzyme catalyses alpha-L-rhamnose = beta-L-rhamnose. Its pathway is carbohydrate metabolism; L-rhamnose metabolism. Functionally, involved in the anomeric conversion of L-rhamnose. This chain is L-rhamnose mutarotase, found in Tolumonas auensis (strain DSM 9187 / NBRC 110442 / TA 4).